A 748-amino-acid polypeptide reads, in one-letter code: Photosystem I P700 chlorophyll a apoprotein A1 (748 aa).

A run of 8 helical transmembrane segments spans residues 70 to 93 (VFSA…FHGA), 156 to 179 (LYTT…FHYH), 195 to 219 (LNHH…HVSM), 291 to 309 (TAHH…GHMY), 346 to 369 (WHAQ…HHMY), 385 to 411 (LSLF…IFMV), 433 to 455 (AIIS…LYIH), and 530 to 548 (FLVH…LILL). Residues cysteine 572 and cysteine 581 each contribute to the [4Fe-4S] cluster site. A run of 2 helical transmembrane segments spans residues 588 to 609 (HIFL…HFSW) and 662 to 684 (LSAY…MFLF). Histidine 673 contacts chlorophyll a'. Residues methionine 681 and tyrosine 689 each contribute to the chlorophyll a site. A phylloquinone-binding site is contributed by tryptophan 690. The helical transmembrane segment at 722 to 742 (AVGVAHYLLGGIATTWAFFLA) threads the bilayer.

Belongs to the PsaA/PsaB family. The PsaA/B heterodimer binds the P700 chlorophyll special pair and subsequent electron acceptors. PSI consists of a core antenna complex that captures photons, and an electron transfer chain that converts photonic excitation into a charge separation. The eukaryotic PSI reaction center is composed of at least 11 subunits. The cofactor is P700 is a chlorophyll a/chlorophyll a' dimer, A0 is one or more chlorophyll a, A1 is one or both phylloquinones and FX is a shared 4Fe-4S iron-sulfur center..

It is found in the plastid. The protein resides in the chloroplast thylakoid membrane. It catalyses the reaction reduced [plastocyanin] + hnu + oxidized [2Fe-2S]-[ferredoxin] = oxidized [plastocyanin] + reduced [2Fe-2S]-[ferredoxin]. PsaA and PsaB bind P700, the primary electron donor of photosystem I (PSI), as well as the electron acceptors A0, A1 and FX. PSI is a plastocyanin-ferredoxin oxidoreductase, converting photonic excitation into a charge separation, which transfers an electron from the donor P700 chlorophyll pair to the spectroscopically characterized acceptors A0, A1, FX, FA and FB in turn. Oxidized P700 is reduced on the lumenal side of the thylakoid membrane by plastocyanin. The protein is Photosystem I P700 chlorophyll a apoprotein A1 of Chara vulgaris (Common stonewort).